Here is a 278-residue protein sequence, read N- to C-terminus: Potassium/proton antiporter CemA (278 aa).

4 helical membrane passes run 61-81 (LIVL…FIIG), 155-175 (AIKN…LIVL), 203-223 (IILF…EVVI), and 238-258 (FIFL…KYWI).

This sequence belongs to the CemA family.

It localises to the plastid. Its subcellular location is the chloroplast inner membrane. It carries out the reaction K(+)(in) + H(+)(out) = K(+)(out) + H(+)(in). Its function is as follows. Contributes to K(+)/H(+) antiport activity by supporting proton efflux to control proton extrusion and homeostasis in chloroplasts in a light-dependent manner to modulate photosynthesis. Prevents excessive induction of non-photochemical quenching (NPQ) under continuous-light conditions. Indirectly promotes efficient inorganic carbon uptake into chloroplasts. The protein is Potassium/proton antiporter CemA of Cyanidium caldarium (Red alga).